The chain runs to 173 residues: tRNA-specific adenosine deaminase (173 aa).

In terms of domain architecture, CMP/dCMP-type deaminase spans 9–121 (EFDEKMMRYA…DYKTGAIGSR (113 aa)). Histidine 61 provides a ligand contact to Zn(2+). Residue glutamate 63 is the Proton donor of the active site. Positions 91 and 94 each coordinate Zn(2+).

It belongs to the cytidine and deoxycytidylate deaminase family. As to quaternary structure, homodimer. Requires Zn(2+) as cofactor.

The catalysed reaction is adenosine(34) in tRNA + H2O + H(+) = inosine(34) in tRNA + NH4(+). Its function is as follows. Catalyzes the deamination of adenosine to inosine at the wobble position 34 of tRNA(Arg2). This Haemophilus influenzae (strain ATCC 51907 / DSM 11121 / KW20 / Rd) protein is tRNA-specific adenosine deaminase.